A 524-amino-acid chain; its full sequence is MLKDIHQHRILILDFGSQYAQLIARRVREIGVYCELMPCDIDEETIRDFNPHGIILSGGPETVTLSHTLRAPAFIFEIGCPVLGICYGMQTMAYQLGGKVNRTAKAEFGHAQLRVLNPAFLFDGIEDQVSPQGEPLLDVWMSHGDIVSELPPGFEATACTDNSPLAAMADFKRRFFGLQFHPEVTHTPQGHRILAHFVIHICQCIPNWTTKHIIEDSIRDIQEKVGKEQVIVGLSGGVDSAVTATLVHKAIGDQLVCVLVDTGLLRLNEVDEVLNVFQKHLGAKVICVDAKDRFMKALKGISDPEEKRKIAGEQFIRVFEEQAKKLNVKWLGQGTIYPDVIESAKTKTGKGHIIKTHHNVGGLPLNMELKLIEPLRELFKDEVRKLGLELGLPADLIYRHPFPGPGLAIRILGEVNAEYINILKQADAIFIEELKKSDYYHQVSQAFAVFMPLKSVGVKGDARHYGYIIALRAVKTVDFMTAQWADLPHEFLSKVSHRIVNEIKEVSRVVYDMTNKPPATIEWE.

A Glutamine amidotransferase type-1 domain is found at 9–207; it reads RILILDFGSQ…VIHICQCIPN (199 aa). Cys-86 (nucleophile) is an active-site residue. Active-site residues include His-181 and Glu-183. Residues 208–399 form the GMPS ATP-PPase domain; it reads WTTKHIIEDS…LGLPADLIYR (192 aa). 235 to 241 is a binding site for ATP; that stretch reads SGGVDSA.

In terms of assembly, homodimer.

The enzyme catalyses XMP + L-glutamine + ATP + H2O = GMP + L-glutamate + AMP + diphosphate + 2 H(+). It participates in purine metabolism; GMP biosynthesis; GMP from XMP (L-Gln route): step 1/1. In terms of biological role, catalyzes the synthesis of GMP from XMP. This Coxiella burnetii (strain CbuG_Q212) (Coxiella burnetii (strain Q212)) protein is GMP synthase [glutamine-hydrolyzing].